The chain runs to 51 residues: Large ribosomal subunit protein eL39 (51 aa).

This sequence belongs to the eukaryotic ribosomal protein eL39 family.

This Methanococcus aeolicus (strain ATCC BAA-1280 / DSM 17508 / OCM 812 / Nankai-3) protein is Large ribosomal subunit protein eL39.